A 211-amino-acid polypeptide reads, in one-letter code: HTH-type transcriptional regulator AlkX (211 aa).

The HTH tetR-type domain occupies 22–82 (ALLRDSVLDA…GYALRLADRL (61 aa)). Residues 45 to 64 (TLSDVARAAGISRQTIYNEF) constitute a DNA-binding region (H-T-H motif).

Homodimer.

It is found in the cytoplasm. DNA-binding activity may be regulated by fatty acids. Represses the expression of the alkB-rubAB operon, which encodes the alkane hydroxylase AlkB and the rubredoxins RubA and RubB. Acts by binding to the promoter region of the operon. In addition, EMSA analysis show that AlkX can bind to the promoter region of mmpS1 and mmpL3 and to the intragenic region of mmpL11, suggesting that it may participate in the regulatory network that controls the expression of MmpL lipid transporters. The polypeptide is HTH-type transcriptional regulator AlkX (Mycobacterium tuberculosis (strain ATCC 25618 / H37Rv)).